A 220-amino-acid polypeptide reads, in one-letter code: Glutathione S-transferase U26 (220 aa).

A GST N-terminal domain is found at 4–83 (DQVILLDYWP…YIDEVWSDAS (80 aa)). Residues 14–15 (SM), 40–41 (VK), 54–55 (KI), and 67–68 (ES) contribute to the glutathione site. Residues 89–210 (DPYQKSRARF…ADSDRIIEYV (122 aa)) form the GST C-terminal domain.

This sequence belongs to the GST superfamily. Tau family.

The protein localises to the cytoplasm. It localises to the cytosol. It carries out the reaction RX + glutathione = an S-substituted glutathione + a halide anion + H(+). Its function is as follows. In vitro, possesses glutathione S-transferase activity toward 1-chloro-2,4-dinitrobenzene (CDNB). May be involved in the conjugation of reduced glutathione to a wide number of exogenous and endogenous hydrophobic electrophiles and have a detoxification role against certain herbicides. The protein is Glutathione S-transferase U26 (GSTU26) of Arabidopsis thaliana (Mouse-ear cress).